The primary structure comprises 349 residues: Cobalt-precorrin-5B C(1)-methyltransferase (349 aa).

The protein belongs to the CbiD family.

It carries out the reaction Co-precorrin-5B + S-adenosyl-L-methionine = Co-precorrin-6A + S-adenosyl-L-homocysteine. It participates in cofactor biosynthesis; adenosylcobalamin biosynthesis; cob(II)yrinate a,c-diamide from sirohydrochlorin (anaerobic route): step 6/10. Catalyzes the methylation of C-1 in cobalt-precorrin-5B to form cobalt-precorrin-6A. This is Cobalt-precorrin-5B C(1)-methyltransferase from Saccharolobus solfataricus (strain ATCC 35092 / DSM 1617 / JCM 11322 / P2) (Sulfolobus solfataricus).